The primary structure comprises 266 residues: 3-methyl-2-oxobutanoate hydroxymethyltransferase (266 aa).

Mg(2+)-binding residues include Asp-45 and Asp-84. 3-methyl-2-oxobutanoate is bound by residues 45 to 46, Asp-84, and Lys-112; that span reads DS. Glu-114 provides a ligand contact to Mg(2+). The active-site Proton acceptor is Glu-181.

This sequence belongs to the PanB family. In terms of assembly, homodecamer; pentamer of dimers. The cofactor is Mg(2+).

The protein resides in the cytoplasm. It catalyses the reaction 3-methyl-2-oxobutanoate + (6R)-5,10-methylene-5,6,7,8-tetrahydrofolate + H2O = 2-dehydropantoate + (6S)-5,6,7,8-tetrahydrofolate. Its pathway is cofactor biosynthesis; (R)-pantothenate biosynthesis; (R)-pantoate from 3-methyl-2-oxobutanoate: step 1/2. In terms of biological role, catalyzes the reversible reaction in which hydroxymethyl group from 5,10-methylenetetrahydrofolate is transferred onto alpha-ketoisovalerate to form ketopantoate. This is 3-methyl-2-oxobutanoate hydroxymethyltransferase from Stutzerimonas stutzeri (strain A1501) (Pseudomonas stutzeri).